The sequence spans 279 residues: Pleckstrin homology domain-containing family F member 1 (279 aa).

One can recognise a PH domain in the interval 35 to 131 (VLLGEGVLTK…WISHIEECVR (97 aa)). The FYVE-type zinc-finger motif lies at 152–212 (DKATDICMRC…VCSLCYRELA (61 aa)). Zn(2+) contacts are provided by Cys158, Cys161, Cys175, Cys178, Cys183, Cys186, Cys204, and Cys207. Residues 218–264 (EEAEEQGAGSPGQPAHLARPICGASSGDDDDSDEDKEGSRDGDWPSS) form a disordered region. The span at 244 to 253 (GDDDDSDEDK) shows a compositional bias: acidic residues.

In terms of tissue distribution, highly expressed in heart and skeletal muscle. Weakly expressed in brain, thymus, spleen, kidney, liver, small intestine, placenta and lung.

The protein resides in the nucleus. It is found in the cytoplasm. It localises to the perinuclear region. The protein localises to the lysosome. Its function is as follows. May induce apoptosis through the lysosomal-mitochondrial pathway. Translocates to the lysosome initiating the permeabilization of lysosomal membrane (LMP) and resulting in the release of CTSD and CTSL to the cytoplasm. Triggers the caspase-independent apoptosis by altering mitochondrial membrane permeabilization (MMP) resulting in the release of PDCD8. The chain is Pleckstrin homology domain-containing family F member 1 (PLEKHF1) from Homo sapiens (Human).